The chain runs to 478 residues: Cytochrome c-552 (478 aa).

Residues 1 to 26 (MTRIKINARRIFSLLIPFFFFTSVHA) form the signal peptide. His-94 lines the heme c pocket. Heme is bound by residues Cys-122, Cys-125, and Lys-126. Heme c-binding residues include Cys-160, Cys-163, His-164, Cys-209, Cys-212, and His-213. Positions 215, 216, 261, and 263 each coordinate Ca(2+). A substrate-binding site is contributed by Tyr-216. Position 264 (His-264) interacts with substrate. His-275, Cys-282, Cys-285, His-286, His-301, Cys-314, Cys-317, His-318, and His-393 together coordinate heme c.

This sequence belongs to the cytochrome c-552 family. The cofactor is Ca(2+). Heme c is required as a cofactor.

It is found in the periplasm. The catalysed reaction is 6 Fe(III)-[cytochrome c] + NH4(+) + 2 H2O = 6 Fe(II)-[cytochrome c] + nitrite + 8 H(+). Its pathway is nitrogen metabolism; nitrate reduction (assimilation). Catalyzes the reduction of nitrite to ammonia, consuming six electrons in the process. The polypeptide is Cytochrome c-552 (Escherichia coli O157:H7 (strain EC4115 / EHEC)).